Consider the following 515-residue polypeptide: MTMQTMTAASGHDAEAGTPPDGPLLALDGITVTFPGVRALDAVSLSVRAGEVHGLMGENGAGKSTLLKVLSGVNQPQAGTLTLNGTAQRFASTRAALEAGIAIIYQELHLVPELTVAENLMLGQLPSRLGVVDERTLAARALDALERLGEHIDPGIPVKYLSIGQRQMIEIGKALMRHARVIAFDEPTSSLSARETTQLFRIIRALRAEGRAIIYVTHRMEEVYELCDRVTVFRDGRRIDTFDSVADLDRDRLIGCMVGRSIEDVYGYRSRPAGDVLIEAKGLAGPGLAEPVSFTARRGEIVGFFGLVGAGRSELMKLLYGAVRPSAGHVELNGKRVAFGSPRDAVRAGIALCPEDRKQEGIVAIASVADNLNISARRHFSPARVLLDGRRERELAQKYIERLAIKTRDGDTPIGALSGGNQQKVVLARWLAERIDVFLMDEPTRGIDVGARAEIYNLFYELAEAGRTVILVSSDLAEVIGVSDRIVVMKEGRIAGEVAKAHATPDALIKLALPR.

The segment at 1-22 is disordered; it reads MTMQTMTAASGHDAEAGTPPDG. ABC transporter domains lie at 25-260 and 260-511; these read LALD…MVGR and RSIE…LIKL. 57–64 contributes to the ATP binding site; sequence GENGAGKS.

The protein belongs to the ABC transporter superfamily. Arabinose importer (TC 3.A.1.2.2) family. As to quaternary structure, the complex is composed of two ATP-binding proteins (AraG), two transmembrane proteins (AraH) and a solute-binding protein (AraF).

It localises to the cell inner membrane. It carries out the reaction L-arabinose(out) + ATP + H2O = L-arabinose(in) + ADP + phosphate + H(+). In terms of biological role, part of the ABC transporter complex AraFGH involved in arabinose import. Responsible for energy coupling to the transport system. The protein is Arabinose import ATP-binding protein AraG 2 of Burkholderia cenocepacia (strain HI2424).